The sequence spans 81 residues: Protein Vpu (81 aa).

The Extracellular portion of the chain corresponds to 1–7; that stretch reads MQPLVII. The helical transmembrane segment at 8-28 threads the bilayer; sequence AIAALVVAIIIAIVVWTIVYI. Over 29–81 the chain is Cytoplasmic; sequence EYRRIKRQRKIDCLIDRIRERAEDSGNESEGEREELSKLVEMGHHAPWDVDDL. The tract at residues 50 to 81 is disordered; that stretch reads AEDSGNESEGEREELSKLVEMGHHAPWDVDDL. A phosphoserine; by host CK2 mark is found at Ser-53 and Ser-57. The span at 62 to 81 shows a compositional bias: basic and acidic residues; it reads EELSKLVEMGHHAPWDVDDL.

It belongs to the HIV-1 VPU protein family. Homopentamer. Interacts with host CD4 and BRTC; these interactions induce proteasomal degradation of CD4. Interacts with host BST2; this interaction leads to the degradation of host BST2. Interacts with host FBXW11. Interacts with host AP1M1; this interaction plays a role in the mistrafficking and subsequent degradation of host BST2. Interacts with host RANBP2; this interaction allows Vpu to down-regulate host BLM sumoylation. Phosphorylated by host CK2. This phosphorylation is necessary for interaction with human BTRC and degradation of CD4.

Its subcellular location is the host membrane. Its activity is regulated as follows. Ion channel activity is inhibited by hexamethylene amiloride in vitro. In terms of biological role, enhances virion budding by targeting host CD4 and Tetherin/BST2 to proteasome degradation. Degradation of CD4 prevents any unwanted premature interactions between viral Env and its host receptor CD4 in the endoplasmic reticulum. Degradation of antiretroviral protein Tetherin/BST2 is important for virion budding, as BST2 tethers new viral particles to the host cell membrane. Mechanistically, Vpu bridges either CD4 or BST2 to BTRC, a substrate recognition subunit of the Skp1/Cullin/F-box protein E3 ubiquitin ligase, induces their ubiquitination and subsequent proteasomal degradation. The alteration of the E3 ligase specificity by Vpu seems to promote the degradation of host IKBKB, leading to NF-kappa-B down-regulation and subsequent apoptosis. Acts as a viroporin that forms an oligomeric ion channel in membranes. Modulates the host DNA repair mechanisms to promote degradation of nuclear viral cDNA in cells that are already productively infected in order to suppress immune sensing and proviral hyper-integration (superinfection). Manipulates PML-NBs and modulates SUMOylation of host BLM protein thereby enhancing its DNA-end processing activity toward viral unintegrated linear DNA. Also inhibits RAD52-mediated homologous repair of viral cDNA, preventing the generation of dead-end circular forms of single copies of the long terminal repeat and permitting sustained nucleolytic attack. The chain is Protein Vpu from Human immunodeficiency virus type 1 group M subtype D (isolate NDK) (HIV-1).